The chain runs to 497 residues: Serine hydroxymethyltransferase (497 aa).

(6S)-5,6,7,8-tetrahydrofolate-binding positions include leucine 176 and 180-182; that span reads GHL. Position 289 is an N6-(pyridoxal phosphate)lysine (lysine 289).

This sequence belongs to the SHMT family. As to quaternary structure, homodimer. Requires pyridoxal 5'-phosphate as cofactor.

Its subcellular location is the cytoplasm. The catalysed reaction is (6R)-5,10-methylene-5,6,7,8-tetrahydrofolate + glycine + H2O = (6S)-5,6,7,8-tetrahydrofolate + L-serine. It participates in one-carbon metabolism; tetrahydrofolate interconversion. The protein operates within amino-acid biosynthesis; glycine biosynthesis; glycine from L-serine: step 1/1. In terms of biological role, catalyzes the reversible interconversion of serine and glycine with tetrahydrofolate (THF) serving as the one-carbon carrier. This reaction serves as the major source of one-carbon groups required for the biosynthesis of purines, thymidylate, methionine, and other important biomolecules. Also exhibits THF-independent aldolase activity toward beta-hydroxyamino acids, producing glycine and aldehydes, via a retro-aldol mechanism. The polypeptide is Serine hydroxymethyltransferase (Chlamydia abortus (strain DSM 27085 / S26/3) (Chlamydophila abortus)).